The chain runs to 283 residues: 5'-nucleotidase SurE (283 aa).

A divalent metal cation contacts are provided by Asp-14, Asp-15, Ser-47, and Asn-105.

It belongs to the SurE nucleotidase family. Requires a divalent metal cation as cofactor.

The protein resides in the cytoplasm. The enzyme catalyses a ribonucleoside 5'-phosphate + H2O = a ribonucleoside + phosphate. Nucleotidase that shows phosphatase activity on nucleoside 5'-monophosphates. The protein is 5'-nucleotidase SurE of Chlamydia trachomatis serovar A (strain ATCC VR-571B / DSM 19440 / HAR-13).